A 156-amino-acid polypeptide reads, in one-letter code: ATP synthase subunit b (156 aa).

A helical transmembrane segment spans residues leucine 7–leucine 29.

The protein belongs to the ATPase B chain family. F-type ATPases have 2 components, F(1) - the catalytic core - and F(0) - the membrane proton channel. F(1) has five subunits: alpha(3), beta(3), gamma(1), delta(1), epsilon(1). F(0) has three main subunits: a(1), b(2) and c(10-14). The alpha and beta chains form an alternating ring which encloses part of the gamma chain. F(1) is attached to F(0) by a central stalk formed by the gamma and epsilon chains, while a peripheral stalk is formed by the delta and b chains.

It is found in the cell inner membrane. F(1)F(0) ATP synthase produces ATP from ADP in the presence of a proton or sodium gradient. F-type ATPases consist of two structural domains, F(1) containing the extramembraneous catalytic core and F(0) containing the membrane proton channel, linked together by a central stalk and a peripheral stalk. During catalysis, ATP synthesis in the catalytic domain of F(1) is coupled via a rotary mechanism of the central stalk subunits to proton translocation. Its function is as follows. Component of the F(0) channel, it forms part of the peripheral stalk, linking F(1) to F(0). In Ectopseudomonas mendocina (strain ymp) (Pseudomonas mendocina), this protein is ATP synthase subunit b.